A 267-amino-acid polypeptide reads, in one-letter code: Ribonuclease HII (267 aa).

Positions 57–245 (WPVAGCDEVG…VVAARERHRA (189 aa)) constitute an RNase H type-2 domain. A divalent metal cation is bound by residues D63, E64, and D154.

This sequence belongs to the RNase HII family. It depends on Mn(2+) as a cofactor. Mg(2+) serves as cofactor.

Its subcellular location is the cytoplasm. The enzyme catalyses Endonucleolytic cleavage to 5'-phosphomonoester.. Its function is as follows. Endonuclease that specifically degrades the RNA of RNA-DNA hybrids. The polypeptide is Ribonuclease HII (Nitrobacter hamburgensis (strain DSM 10229 / NCIMB 13809 / X14)).